A 533-amino-acid polypeptide reads, in one-letter code: DNA-directed RNA polymerase III subunit RPC3 (533 aa).

The disordered stretch occupies residues 162–181; that stretch reads LVPDTDSSDRGPPPPAPTLV. A Phosphoserine modification is found at Ser194. Residues 197–228 form a disordered region; that stretch reads GKGKRRRSSDEDATGEPKAKKPRYTDNKEPSP. Residues 211–227 are compositionally biased toward basic and acidic residues; that stretch reads GEPKAKKPRYTDNKEPS.

The protein belongs to the eukaryotic RPC3/POLR3C RNA polymerase subunit family. Component of the RNA polymerase III complex consisting of 17 subunits: a ten-subunit horseshoe-shaped catalytic core composed of POLR3A/RPC1, POLR3B/RPC2, POLR1C/RPAC1, POLR1D/RPAC2, POLR3K/RPC10, POLR2E/RPABC1, POLR2F/RPABC2, POLR2H/RPABC3, POLR2K/RPABC4 and POLR2L/RPABC5; a mobile stalk composed of two subunits POLR3H/RPC8 and CRCP/RPC9, protruding from the core and functioning primarily in transcription initiation; and additional subunits homologous to general transcription factors of the RNA polymerase II machinery, POLR3C/RPC3-POLR3F/RPC6-POLR3G/RPC7 heterotrimer required for transcription initiation and POLR3D/RPC4-POLR3E/RPC5 heterodimer involved in both transcription initiation and termination. Directly interacts with POLR3G/RPC7 and POLR3GL. Directly interacts with POLR3F/RPC6. Interacts with GTF3C4. As part of the RNA polymerase III complex, interacts with PKP2.

The protein localises to the nucleus. In terms of biological role, DNA-dependent RNA polymerase catalyzes the transcription of DNA into RNA using the four ribonucleoside triphosphates as substrates. Specific peripheric component of RNA polymerase III (Pol III) which synthesizes small non-coding RNAs including 5S rRNA, snRNAs, tRNAs and miRNAs from at least 500 distinct genomic loci. Part of POLR3C/RPC3-POLR3F/RPC6-POLR3G/RPC7 heterotrimer, coordinates the dynamics of Pol III stalk and clamp modules during the transition from apo to elongation state. Pol III plays a key role in sensing and limiting infection by intracellular bacteria and DNA viruses. Acts as a nuclear and cytosolic DNA sensor involved in innate immune response. Can sense non-self dsDNA that serves as template for transcription into dsRNA. The non-self RNA polymerase III transcripts, such as Epstein-Barr virus-encoded RNAs (EBERs) induce type I interferon and NF-kappa-B through the RIG-I pathway. Preferentially binds single-stranded DNA (ssDNA) in a sequence-independent manner. The sequence is that of DNA-directed RNA polymerase III subunit RPC3 from Mus musculus (Mouse).